The following is a 263-amino-acid chain: uncharacterized protein (263 aa).

The protein belongs to the flavoredoxin family. FMN serves as cofactor.

This is an uncharacterized protein from Aeropyrum pernix (strain ATCC 700893 / DSM 11879 / JCM 9820 / NBRC 100138 / K1).